We begin with the raw amino-acid sequence, 887 residues long: Alanine--tRNA ligase (887 aa).

Zn(2+) contacts are provided by His564, His568, Cys676, and His680.

The protein belongs to the class-II aminoacyl-tRNA synthetase family. Zn(2+) serves as cofactor.

It is found in the cytoplasm. It catalyses the reaction tRNA(Ala) + L-alanine + ATP = L-alanyl-tRNA(Ala) + AMP + diphosphate. Functionally, catalyzes the attachment of alanine to tRNA(Ala) in a two-step reaction: alanine is first activated by ATP to form Ala-AMP and then transferred to the acceptor end of tRNA(Ala). Also edits incorrectly charged Ser-tRNA(Ala) and Gly-tRNA(Ala) via its editing domain. In Agrobacterium fabrum (strain C58 / ATCC 33970) (Agrobacterium tumefaciens (strain C58)), this protein is Alanine--tRNA ligase.